The chain runs to 343 residues: Protein rax1 (343 aa).

The Cytoplasmic portion of the chain corresponds to Met-1 to Arg-235. The RGS domain occupies Glu-109 to Asn-228. A helical transmembrane segment spans residues Phe-236–Leu-256. Over Asp-257–Arg-263 the chain is Extracellular. The chain crosses the membrane as a helical span at residues Val-264 to His-284. Topologically, residues Asp-285 to Ala-317 are cytoplasmic. A helical transmembrane segment spans residues Ile-318–Val-338. Residues Pro-339–Leu-343 lie on the Extracellular side of the membrane.

It is found in the cell membrane. The protein resides in the endoplasmic reticulum membrane. Its function is as follows. May be involved in cell polarization and division. The polypeptide is Protein rax1 (rax1) (Schizosaccharomyces pombe (strain 972 / ATCC 24843) (Fission yeast)).